A 669-amino-acid chain; its full sequence is MQNSHMDEYRNSSNGSTGNSSEVVVEHPTDFSTEIMNVTEMEQSPDDSPNVNASTEETEMASAVDLPVTLTETEANFPPEYEKFWKTVENNPQDFTGWVYLLQYVEQENHLMAARKAFDRFFIHYPYCYGYWKKYADLEKRHDNIKPSDEVYRRGLQAIPLSVDLWIHYINFLKETLDPGDPETNNTIRGTFEHAVLAAGTDFRSDRLWEMYINWENEQGNLREVTAIYDRILGIPTQLYSHHFQRFKEHVQNNLPRDLLTGEQFIQLRRELASVNGHSGDDGPPGDDLPSGIEDITDPAKLITEIENMRHRIIEIHQEMFNYNEHEVSKRWTFEEGIKRPYFHVKPLEKAQLKNWKEYLEFEIENGTHERVVVLFERCVISCALYEEFWIKYAKYMENHSIEGVRHVFSRACTIHLPKKPMVHMLWAAFEEQQGNINEARNILKTFEECVLGLAMVRLRRVSLERRHGNLEEAEHLLQDAIKNAKSNNESSFYAVKLARHLFKIQKNLPKSRKVLLEAIERDKENTKLYLNLLEMEYSGDLKQNEENILNCFDKAVHGSLPIKMRITFSQRKVEFLEDFGSDVNKLLNAYDEHQTLLKEQDSLKRKAENGSEEPEEKKAHTEDTTSSSTQMIDGDLQANQAVYNYSAWYQYNYQNPWNYGQYYPPPPT.

The span at 1–10 shows a compositional bias: basic and acidic residues; sequence MQNSHMDEYR. Residues 1 to 23 are disordered; that stretch reads MQNSHMDEYRNSSNGSTGNSSEV. The segment covering 11–23 has biased composition (low complexity); that stretch reads NSSNGSTGNSSEV. The residue at position 44 (S44) is a Phosphoserine. HAT repeat units follow at residues 109-141, 143-175, 183-218, 220-253, 333-365, 367-399, and 404-436; these read NHLM…LEKR, DNIK…FLKE, ETNN…WENE, GNLR…HVQN, TFEE…FEIE, GTHE…YMEN, and GVRH…QQGN. Residues 599 to 624 are compositionally biased toward basic and acidic residues; sequence KEQDSLKRKAENGSEEPEEKKAHTED. The disordered stretch occupies residues 599–634; that stretch reads KEQDSLKRKAENGSEEPEEKKAHTEDTTSSSTQMID. The span at 625–634 shows a compositional bias: polar residues; sequence TTSSSTQMID.

Belongs to the PRP39 family.

Its subcellular location is the nucleus. Functionally, involved in pre-mRNA splicing. The sequence is that of Pre-mRNA-processing factor 39 (PRPF39) from Homo sapiens (Human).